The chain runs to 307 residues: MSTPTTFRPVLERIAEEIERTPGSGRPADYIPALAARDPRRFGMAVAELDGTVYGVGDWREPFSAQSLTKVFTLALDLAREGDALWEHVGREPSGNPFNSLVQLEYENGIPRNPFINAGALVVTDRLHTRTGDAAGELLAFLRAESGNPDLGHDEEVAASEAAHGDRNAALAHFMASYGNIDNPVPVLLDQYFRQCSVAASCADLALATGFLARHGIRADGTRLLSRSRAKQINAVMLTCGTYDAAGDFAHRVGLPGKSGVGGGIIAVVPGHCTLCVWGPGLDERGNSVAGVAALDRFTTLTGLSVF.

Substrate-binding residues include Ser-67, Asn-117, Glu-161, Asn-168, Tyr-192, Tyr-243, and Val-261.

This sequence belongs to the glutaminase family. Homotetramer.

The enzyme catalyses L-glutamine + H2O = L-glutamate + NH4(+). The chain is Glutaminase from Streptomyces coelicolor (strain ATCC BAA-471 / A3(2) / M145).